Reading from the N-terminus, the 200-residue chain is Nucleoside triphosphate pyrophosphatase (200 aa).

The active-site Proton acceptor is the aspartate 79.

The protein belongs to the Maf family. A divalent metal cation is required as a cofactor.

The protein resides in the cytoplasm. The enzyme catalyses a ribonucleoside 5'-triphosphate + H2O = a ribonucleoside 5'-phosphate + diphosphate + H(+). The catalysed reaction is a 2'-deoxyribonucleoside 5'-triphosphate + H2O = a 2'-deoxyribonucleoside 5'-phosphate + diphosphate + H(+). Functionally, nucleoside triphosphate pyrophosphatase. May have a dual role in cell division arrest and in preventing the incorporation of modified nucleotides into cellular nucleic acids. The chain is Nucleoside triphosphate pyrophosphatase from Legionella pneumophila (strain Paris).